The sequence spans 453 residues: Bifunctional protein GlmU (453 aa).

The segment at 1–226 (MVAVAILAAG…YLEITGINDR (226 aa)) is pyrophosphorylase. Residues 7–10 (LAAG), K21, Q73, and 78–79 (GT) each bind UDP-N-acetyl-alpha-D-glucosamine. D103 contributes to the Mg(2+) binding site. Residues G140, E155, N170, and N224 each coordinate UDP-N-acetyl-alpha-D-glucosamine. N224 is a binding site for Mg(2+). The tract at residues 227-247 (KQLAMANGILQNRVKDHWMAQ) is linker. Residues 248 to 453 (GVTLIDPDSI…EWKKTIESKK (206 aa)) form an N-acetyltransferase region. Residues R329 and K347 each coordinate UDP-N-acetyl-alpha-D-glucosamine. Catalysis depends on H359, which acts as the Proton acceptor. UDP-N-acetyl-alpha-D-glucosamine-binding residues include Y362 and N373. Acetyl-CoA is bound by residues A376, 382-383 (NY), A419, and R436.

The protein in the N-terminal section; belongs to the N-acetylglucosamine-1-phosphate uridyltransferase family. It in the C-terminal section; belongs to the transferase hexapeptide repeat family. Homotrimer. Mg(2+) serves as cofactor.

Its subcellular location is the cytoplasm. It carries out the reaction alpha-D-glucosamine 1-phosphate + acetyl-CoA = N-acetyl-alpha-D-glucosamine 1-phosphate + CoA + H(+). The enzyme catalyses N-acetyl-alpha-D-glucosamine 1-phosphate + UTP + H(+) = UDP-N-acetyl-alpha-D-glucosamine + diphosphate. The protein operates within nucleotide-sugar biosynthesis; UDP-N-acetyl-alpha-D-glucosamine biosynthesis; N-acetyl-alpha-D-glucosamine 1-phosphate from alpha-D-glucosamine 6-phosphate (route II): step 2/2. It participates in nucleotide-sugar biosynthesis; UDP-N-acetyl-alpha-D-glucosamine biosynthesis; UDP-N-acetyl-alpha-D-glucosamine from N-acetyl-alpha-D-glucosamine 1-phosphate: step 1/1. Its pathway is bacterial outer membrane biogenesis; LPS lipid A biosynthesis. Functionally, catalyzes the last two sequential reactions in the de novo biosynthetic pathway for UDP-N-acetylglucosamine (UDP-GlcNAc). The C-terminal domain catalyzes the transfer of acetyl group from acetyl coenzyme A to glucosamine-1-phosphate (GlcN-1-P) to produce N-acetylglucosamine-1-phosphate (GlcNAc-1-P), which is converted into UDP-GlcNAc by the transfer of uridine 5-monophosphate (from uridine 5-triphosphate), a reaction catalyzed by the N-terminal domain. This Rippkaea orientalis (strain PCC 8801 / RF-1) (Cyanothece sp. (strain PCC 8801)) protein is Bifunctional protein GlmU.